A 265-amino-acid polypeptide reads, in one-letter code: Phosphate import ATP-binding protein PstB (265 aa).

The 243-residue stretch at 18–260 folds into the ABC transporter domain; sequence MECRDCHVYY…PEDPRTESYI (243 aa). 50-57 is an ATP binding site; it reads GPSGCGKS.

It belongs to the ABC transporter superfamily. Phosphate importer (TC 3.A.1.7) family. The complex is composed of two ATP-binding proteins (PstB), two transmembrane proteins (PstC and PstA) and a solute-binding protein (PstS).

It localises to the cell inner membrane. The catalysed reaction is phosphate(out) + ATP + H2O = ADP + 2 phosphate(in) + H(+). Its function is as follows. Part of the ABC transporter complex PstSACB involved in phosphate import. Responsible for energy coupling to the transport system. This is Phosphate import ATP-binding protein PstB from Ruegeria pomeroyi (strain ATCC 700808 / DSM 15171 / DSS-3) (Silicibacter pomeroyi).